The following is a 456-amino-acid chain: Signal recognition particle receptor FtsY (456 aa).

Residues 1 to 26 (MFDGLKKKLNRFRNDVEETAEEKAEA) show a composition bias toward basic and acidic residues. The segment at 1 to 163 (MFDGLKKKLN…DEDDSSGPGR (163 aa)) is disordered. Over residues 27–39 (AADEAESDADAEA) the composition is skewed to acidic residues. Over residues 40 to 62 (ESAPADTDNAAVEPEASEPAAAD) the composition is skewed to low complexity. Residues 63–81 (PDADAVGDADAGSEADAVD) show a composition bias toward acidic residues. Positions 82–97 (AADAPADAESSSAAVE) are enriched in low complexity. The segment covering 112 to 134 (PDSEVDAGADTGDEPSGEPTADE) has biased composition (acidic residues). GTP contacts are provided by residues 265–272 (GINGVGKT), 347–351 (DTAGR), and 405–408 (TKAD).

Belongs to the GTP-binding SRP family. FtsY subfamily. As to quaternary structure, part of the signal recognition particle protein translocation system, which is composed of SRP and FtsY.

It localises to the cell membrane. Its subcellular location is the cytoplasm. It catalyses the reaction GTP + H2O = GDP + phosphate + H(+). In terms of biological role, involved in targeting and insertion of nascent membrane proteins into the cytoplasmic membrane. Acts as a receptor for the complex formed by the signal recognition particle (SRP) and the ribosome-nascent chain (RNC). The protein is Signal recognition particle receptor FtsY of Haloferax volcanii (strain ATCC 29605 / DSM 3757 / JCM 8879 / NBRC 14742 / NCIMB 2012 / VKM B-1768 / DS2) (Halobacterium volcanii).